Consider the following 261-residue polypeptide: Uridine-cytidine kinase 2-B (261 aa).

29–37 (GGTASGKSS) provides a ligand contact to ATP. Substrate-binding residues include D86, Y114, H119, R168, R178, and Q186. Residue D215 participates in ATP binding. Residues 238–261 (RQNGFQNGHGTPRQRRTSESSRPH) form a disordered region.

It belongs to the uridine kinase family. As to quaternary structure, homotetramer.

It carries out the reaction uridine + ATP = UMP + ADP + H(+). It catalyses the reaction cytidine + ATP = CMP + ADP + H(+). It participates in pyrimidine metabolism; CTP biosynthesis via salvage pathway; CTP from cytidine: step 1/3. Its pathway is pyrimidine metabolism; UMP biosynthesis via salvage pathway; UMP from uridine: step 1/1. Its function is as follows. Phosphorylates uridine and cytidine to uridine monophosphate and cytidine monophosphate. Does not phosphorylate deoxyribonucleosides or purine ribonucleosides. Can use ATP or GTP as a phosphate donor. The chain is Uridine-cytidine kinase 2-B (uck2b) from Danio rerio (Zebrafish).